The following is a 297-amino-acid chain: MNLGTLVSETRNPQTMDLDALSTPELVKRFNEQDTLVAEAVKATLPDVARAVDAAAAALKSGGRIIYMGAGTSGRLGVLDASECPPTFGVPHGLVVGLIAGGPGALLKAVEGAEDSQQAGEDDLVALNLQEQDLVVGLAASGRTPYVIGGLRYARQSGCTTVAVSCNPDSPIAREANIAISPVVGPEALTGSTRLKSGTAQKMVLNMISTGAMVKFGKVYQNLMVDMKATNVKLVDRACRMVVEATGIGREEAETLLKQTDFEVKPAILMALTGLDAAAAREKLAAHQGFLRAALEH.

Positions 55-218 (AAAALKSGGR…STGAMVKFGK (164 aa)) constitute an SIS domain. Glu-83 serves as the catalytic Proton donor. Glu-114 is a catalytic residue.

Belongs to the GCKR-like family. MurNAc-6-P etherase subfamily. Homodimer.

The catalysed reaction is N-acetyl-D-muramate 6-phosphate + H2O = N-acetyl-D-glucosamine 6-phosphate + (R)-lactate. Its pathway is amino-sugar metabolism; 1,6-anhydro-N-acetylmuramate degradation. It functions in the pathway amino-sugar metabolism; N-acetylmuramate degradation. The protein operates within cell wall biogenesis; peptidoglycan recycling. In terms of biological role, specifically catalyzes the cleavage of the D-lactyl ether substituent of MurNAc 6-phosphate, producing GlcNAc 6-phosphate and D-lactate. Together with AnmK, is also required for the utilization of anhydro-N-acetylmuramic acid (anhMurNAc) either imported from the medium or derived from its own cell wall murein, and thus plays a role in cell wall recycling. In Salmonella typhi, this protein is N-acetylmuramic acid 6-phosphate etherase.